The primary structure comprises 21 residues: Putative pancreatic polypeptide 2 (21 aa).

This sequence belongs to the NPY family.

The chain is Putative pancreatic polypeptide 2 (PPY2P) from Homo sapiens (Human).